Reading from the N-terminus, the 1719-residue chain is Sodium channel protein type 4 subunit alpha B (1719 aa).

Over 1–126 (MRTLLPPVGS…IVAIKILIHS (126 aa)) the chain is Cytoplasmic. Residues 28–50 (QQIREEERKRTNAQVSEELPEPA) form a disordered region. An I repeat occupies 108–431 (LLSPFNALRI…VVAMAYAEQN (324 aa)). Residues 127 to 145 (LFSLFIMATILTNCAFMTL) traverse the membrane as a helical segment. At 146 to 152 (SDPPAWS) the chain is on the extracellular side. A helical transmembrane segment spans residues 153 to 173 (KTMEYVFTFIYTFEATIKILS). Residues 174-187 (RGFCVGKFTFLKDP) are Cytoplasmic-facing. The chain crosses the membrane as a helical span at residues 188–205 (WNWLDFMVISMAYLTELV). The Extracellular portion of the chain corresponds to 206 to 211 (DLGNVS). Asparagine 209 carries an N-linked (GlcNAc...) asparagine glycan. The helical transmembrane segment at 212–228 (VLRTFRVLRALKTITVI) threads the bilayer. Over 229-247 (PGLKTIVGALIQSVRKLAD) the chain is Cytoplasmic. Residues 248–267 (AMVLTVFCLSVFALIGLQLF) form a helical membrane-spanning segment. The Extracellular segment spans residues 268–368 (MGNLRQKCVL…PNYGYTSYDS (101 aa)). A disulfide bridge links cysteine 275 with cysteine 337. N-linked (GlcNAc...) asparagine glycans are attached at residues asparagine 285 and asparagine 339. Residues cysteine 346 and cysteine 352 are joined by a disulfide bond. The pore-forming intramembrane region spans 369–393 (FGWAFLALFRLMTQDFWENLFQLTL). At 394–400 (RTAGKTY) the chain is on the extracellular side. A helical transmembrane segment spans residues 401–421 (MIFFVVVIFLGSFYLINLILA). The Cytoplasmic portion of the chain corresponds to 422–513 (VVAMAYAEQN…ECLYAIVMDP (92 aa)). Residues 495–766 (CCGCWRHLKE…QIAINRINRA (272 aa)) form an II repeat. The chain crosses the membrane as a helical span at residues 514 to 532 (FVDLGITICIILNTVFMAM). Topologically, residues 533–543 (EHYPMSADFEE) are extracellular. A helical transmembrane segment spans residues 544–563 (LLSVGNLVFTGIFTGEMVFK). Residues 564 to 577 (ILAMDPYFYFQVGW) lie on the Cytoplasmic side of the membrane. The chain crosses the membrane as a helical span at residues 578 to 597 (NIFDSIIVTISLVELGLANV). Topologically, residues 598–599 (QG) are extracellular. Residues 600–617 (LSVLRSFRLMRVFKLAKS) traverse the membrane as a helical segment. Residues 618–633 (WPTLNMLIKIIGNSVG) are Cytoplasmic-facing. A helical membrane pass occupies residues 634-652 (ALGNLTLVLAIIVFIFAVV). Topologically, residues 653-681 (GMQLFGKNYKDCVCRISEDCVLPRWHMND) are extracellular. A disulfide bridge links cysteine 666 with cysteine 672. The pore-forming intramembrane region spans 682–702 (FFHAFLIIFRVLCGEWIESMW). The Extracellular segment spans residues 703–713 (DCMEVSGQTMC). Cysteines 704 and 713 form a disulfide. A helical transmembrane segment spans residues 714–732 (LIVFMMVLVIGNLVVLNLF). At 733 to 919 (LALLLSSFSG…TCFSIVENNY (187 aa)) the chain is on the cytoplasmic side. A compositionally biased stretch (acidic residues) spans 834 to 845 (SDSDDSDYDEDK). The disordered stretch occupies residues 834-862 (SDSDDSDYDEDKDSQCDESSVCSSVQKPE). An III repeat occupies 900 to 1215 (RGKIWCNIRR…KKYYNAMKKL (316 aa)). A helical membrane pass occupies residues 920–937 (FESFIVFMILLSSGALAF). The Extracellular segment spans residues 938-950 (EDIYLEKHQLIKS). Residues 951–969 (ILEYADKVFTYVFVMEMVL) traverse the membrane as a helical segment. At 970–983 (KWFAYGFKSYFSNA) the chain is on the cytoplasmic side. The helical transmembrane segment at 984-1002 (WCWLDFLIVDVSLVSLTAN) threads the bilayer. The Extracellular portion of the chain corresponds to 1003-1010 (ILGYSELG). Residues 1011–1029 (AIKSLRTLRALRPLRALSR) form a helical membrane-spanning segment. The Cytoplasmic portion of the chain corresponds to 1030-1046 (FEGMRVVVNALVGAVPS). A helical transmembrane segment spans residues 1047 to 1066 (IFNVLLVCLIFWLIFSIMGV). The Extracellular segment spans residues 1067–1119 (NLFAGKFSYCFNETSQEIIDTKVVDNKTECIALIKANFTEVRWKNVKVNYDNV). The cysteines at positions 1076 and 1096 are disulfide-linked. Residues asparagine 1078 and asparagine 1092 are each glycosylated (N-linked (GlcNAc...) asparagine). An intramembrane region (pore-forming) is located at residues 1120 to 1141 (GIGYLSLLQVATFKGWTDIMYA). At 1142 to 1158 (AVDSRDVESQPIYEVNL) the chain is on the extracellular side. Residues 1159-1180 (YMYLYFVIFIIFGSFFTLNLFI) traverse the membrane as a helical segment. The Cytoplasmic segment spans residues 1181–1243 (GVIIDNFNQQ…LVFDLVTKQI (63 aa)). The tract at residues 1199-1201 (IFM) is important for rapid channel inactivation. Residues 1224-1521 (VPRPENPFQG…WEKFDPDASQ (298 aa)) form an IV repeat. A helical transmembrane segment spans residues 1244-1261 (FDVFIMVLICLNMVTMMV). At 1262 to 1272 (ETDEQSDKKEE) the chain is on the extracellular side. Residues 1273-1291 (VLYWINVVFILIFTTECTL) traverse the membrane as a helical segment. Topologically, residues 1292 to 1303 (KIIALRRHYFSI) are cytoplasmic. Residues 1304-1321 (GWNIFDFVVVILSILGLL) traverse the membrane as a helical segment. At 1322–1334 (LADIIEKYFVSPT) the chain is on the extracellular side. Residues 1335 to 1351 (LFRVIRLARIGRVLRLI) form a helical membrane-spanning segment. Residues 1352 to 1370 (RGAKGIRTLLFALMMSLPA) are Cytoplasmic-facing. The chain crosses the membrane as a helical span at residues 1371–1388 (LFNIGLLLFLIMFIFSIF). The Extracellular segment spans residues 1389-1410 (GMSNFAYVKKEALIDDMFNFET). Positions 1411–1433 (FGNSMICLFMITTSAGWDGLLSP) form an intramembrane region, pore-forming. Over 1434–1462 (IMNTPPDCDPNVENPGTTVRGNCGSPAIG) the chain is Extracellular. An intrachain disulfide couples cysteine 1441 to cysteine 1456. Residues 1463 to 1485 (IAFFSTYIIMSFLVVVNMFIAII) traverse the membrane as a helical segment. At 1486 to 1719 (LENFNVATEE…QERDQRETSV (234 aa)) the chain is on the cytoplasmic side. One can recognise an IQ domain in the interval 1615–1644 (EEVAATVIQRAYRKYLLLRTVRLASFMYRE).

It belongs to the sodium channel (TC 1.A.1.10) family. Nav1.4/SCN4A subfamily. Voltage-gated sodium (Nav) channels consist of an ion-conducting alpha subunit which is functional on its own associated with regulatory beta subunits.

It localises to the cell membrane. It catalyses the reaction Na(+)(in) = Na(+)(out). Its function is as follows. Pore-forming subunit of a voltage-gated sodium (Nav) channel that directly mediates the depolarizing phase of action potentials in excitable membranes. Navs, also called VGSCs (voltage-gated sodium channels) or VDSCs (voltage-dependent sodium channels), operate by switching between closed and open conformations depending on the voltage difference across the membrane. In the open conformation they allow Na(+) ions to selectively pass through the pore, along their electrochemical gradient. The influx of Na+ ions provokes membrane depolarization, initiating the propagation of electrical signals throughout cells and tissues. The protein is Sodium channel protein type 4 subunit alpha B (scn4ab) of Takifugu rubripes (Japanese pufferfish).